A 2055-amino-acid chain; its full sequence is Protein PHOTOPERIOD-INDEPENDENT EARLY FLOWERING 1 (2055 aa).

The tract at residues 1–47 (MASKGGKSKPDIVMASKSGKSKPDNESRAKRQKTLEAPKEPRRPKTH) is disordered. Basic and acidic residues predominate over residues 21 to 47 (SKPDNESRAKRQKTLEAPKEPRRPKTH). The Nuclear localization signal 1 motif lies at 29-36 (AKRQKTLE). The HSA domain occupies 35-107 (LEAPKEPRRP…EEQRLRKVAL (73 aa)). 2 coiled-coil regions span residues 78-147 (LRAS…LEFL) and 229-250 (EEDEKHFTKRERQEELEALQNE). Disordered regions lie at residues 183–332 (KSDE…SNDS) and 340–359 (ETHSHDLEPGMTTASVKSRK). Over residues 208–230 (ELDEDYDLKSEDETEDDEDTIEE) the composition is skewed to acidic residues. Basic and acidic residues-rich tracts occupy residues 231 to 243 (DEKHFTKRERQEE) and 267 to 276 (VSRETSPVKD). A coiled-coil region spans residues 392–416 (EEELAKADNEDHVEEIALLQKESEM). Residues 432–461 (KDISEDESESSFAVSEDSIVDSDENRQQAD) form a disordered region. The Helicase ATP-binding domain occupies 548–713 (VTMYEKKLNG…WSLMHFLMPH (166 aa)). Residue 561 to 568 (DEMGLGKT) coordinates ATP. Residues 664–667 (DEAH) carry the DEAH box motif. Residues 1076–1229 (KLQELAMLLR…NLVIQNGEYN (154 aa)) enclose the Helicase C-terminal domain. The segment at 1293–1313 (EEAVDNQEFTEEPVERPEDDE) is disordered. A coiled-coil region spans residues 1419–1492 (FEEKEWELDH…EREAAEVAEM (74 aa)). Short sequence motifs (nuclear localization signal) lie at residues 1506–1513 (KKKKKAKK) and 1570–1577 (KKRDLIVD). The disordered stretch occupies residues 1577 to 1597 (DTDEEKTSKKKAKKHKKSLPN). Residues 1584–1594 (SKKKAKKHKKS) are compositionally biased toward basic residues. Positions 1673-1727 (SWLPQEDAILCAMVHEYGPNWNFVSGTLYGMTAGGAYRGRYRHPAYCCERYRELI) constitute a Myb-like domain. 2 disordered regions span residues 1843 to 1864 (ALQDSGPSQPDNTISRSRLQET) and 1951 to 1977 (KSRTGTKAQSLGKHKLSASDSAKSTKS). Over residues 1844–1864 (LQDSGPSQPDNTISRSRLQET) the composition is skewed to polar residues. Residues 2006-2029 (GDREEEEEQEVDEKANSAEIEMIS) adopt a coiled-coil conformation.

It belongs to the SNF2/RAD54 helicase family. SWR1 subfamily. In terms of assembly, component of the SWR1 chromatin-remodeling complex composed of at least ARP6/ESD1/SUF3, PIE1, SWC6, SWC2 and H2AZs (HTA8, HTA9, HTA11). Interacts (via c-terminus) with SWC6 and ARP6 and (via N-terminus) with H2AZs. Expressed in ovules, but not in stamens.

Its subcellular location is the nucleus. It catalyses the reaction ATP + H2O = ADP + phosphate + H(+). Component of the SWR1 complex which mediates the ATP-dependent exchange of histone H2A for the H2A variant H2A.F/Z leading to transcriptional regulation of selected genes (e.g. FLC) by chromatin remodeling. Probable DNA-dependent ATPase. Not involved in the repression of FLC in gametophytes, but required for the reactivation of FLC in early embryos and for the maintenance of full activation of FLC in late embryos. This Arabidopsis thaliana (Mouse-ear cress) protein is Protein PHOTOPERIOD-INDEPENDENT EARLY FLOWERING 1 (PIE1).